The chain runs to 534 residues: Invertase (534 aa).

The signal sequence occupies residues 1–21 (MKITTLVASILMSVLLEPVIA). Residues 46-49 (WLND) and Gln-67 contribute to the substrate site. The active site involves Asp-49. Asn-71 carries N-linked (GlcNAc...) asparagine glycosylation. A substrate-binding site is contributed by 109–110 (FS). N-linked (GlcNAc...) asparagine glycans are attached at residues Asn-118, Asn-119, and Asn-172. Residue 177-178 (RD) coordinates substrate. An N-linked (GlcNAc...) asparagine glycan is attached at Asn-218. Residues Glu-229 and Trp-313 each coordinate substrate. Asn-375, Asn-381, Asn-392, and Asn-420 each carry an N-linked (GlcNAc...) asparagine glycan.

The protein belongs to the glycosyl hydrolase 32 family.

The enzyme catalyses Hydrolysis of terminal non-reducing beta-D-fructofuranoside residues in beta-D-fructofuranosides.. The sequence is that of Invertase (INV) from Debaryomyces hansenii (strain ATCC 36239 / CBS 767 / BCRC 21394 / JCM 1990 / NBRC 0083 / IGC 2968) (Yeast).